A 315-amino-acid polypeptide reads, in one-letter code: tRNA dimethylallyltransferase (315 aa).

10–17 contributes to the ATP binding site; sequence GPTGVGKT. 12–17 lines the substrate pocket; sequence TGVGKT. The interaction with substrate tRNA stretch occupies residues 35 to 38; it reads DSMQ.

It belongs to the IPP transferase family. As to quaternary structure, monomer. It depends on Mg(2+) as a cofactor.

The enzyme catalyses adenosine(37) in tRNA + dimethylallyl diphosphate = N(6)-dimethylallyladenosine(37) in tRNA + diphosphate. Functionally, catalyzes the transfer of a dimethylallyl group onto the adenine at position 37 in tRNAs that read codons beginning with uridine, leading to the formation of N6-(dimethylallyl)adenosine (i(6)A). This Thermodesulfovibrio yellowstonii (strain ATCC 51303 / DSM 11347 / YP87) protein is tRNA dimethylallyltransferase.